Consider the following 343-residue polypeptide: MKTLTITRPDDWHIHLRDGAQLTDTVRDISRYMGRAIVMPNLVPPAIDTETALAYYDRIKARVPAGSQFEPLMVLYLTDKTSPDEIRKAKASGKVFAAKLYPAGATTNSDSGVTDLKNIYPALEAMQEVGMLFLVHGEVTDSSIDIFDRERVFIENILSKIVTDFPNLKIVLEHITTKDAVDFVTQASDNVAATITAHHLLYNRNHMLAGGIRPHFYCLPILKRNTHQQALLAAAASGNKKFFLGTDSAPHAKDRKEAACGCAGSYTAHAAIELYAEAFESVNALDKLEAFASFNGPDFYNLPRNSDTITLVKKAWDIPASYPLGDTNVVPIRAGEQIDWQVE.

Zn(2+) is bound by residues histidine 13 and histidine 15. Substrate contacts are provided by residues 15–17 (HLR) and asparagine 41. Positions 99, 136, and 174 each coordinate Zn(2+). Lysine 99 is modified (N6-carboxylysine). Histidine 136 is a binding site for substrate. Substrate is bound at residue leucine 219. Position 247 (aspartate 247) interacts with Zn(2+). Residue aspartate 247 is part of the active site. Substrate contacts are provided by histidine 251 and alanine 263.

It belongs to the metallo-dependent hydrolases superfamily. DHOase family. Class II DHOase subfamily. Homodimer. The cofactor is Zn(2+).

It catalyses the reaction (S)-dihydroorotate + H2O = N-carbamoyl-L-aspartate + H(+). It functions in the pathway pyrimidine metabolism; UMP biosynthesis via de novo pathway; (S)-dihydroorotate from bicarbonate: step 3/3. In terms of biological role, catalyzes the reversible cyclization of carbamoyl aspartate to dihydroorotate. The protein is Dihydroorotase of Shewanella oneidensis (strain ATCC 700550 / JCM 31522 / CIP 106686 / LMG 19005 / NCIMB 14063 / MR-1).